Here is a 349-residue protein sequence, read N- to C-terminus: Phenylalanine--tRNA ligase alpha subunit (349 aa).

Position 259 (E259) interacts with Mg(2+).

It belongs to the class-II aminoacyl-tRNA synthetase family. Phe-tRNA synthetase alpha subunit type 1 subfamily. Tetramer of two alpha and two beta subunits. The cofactor is Mg(2+).

It is found in the cytoplasm. The enzyme catalyses tRNA(Phe) + L-phenylalanine + ATP = L-phenylalanyl-tRNA(Phe) + AMP + diphosphate + H(+). This is Phenylalanine--tRNA ligase alpha subunit from Lactobacillus helveticus (strain DPC 4571).